Consider the following 119-residue polypeptide: Large ribosomal subunit protein bL20 (119 aa).

Belongs to the bacterial ribosomal protein bL20 family.

Functionally, binds directly to 23S ribosomal RNA and is necessary for the in vitro assembly process of the 50S ribosomal subunit. It is not involved in the protein synthesizing functions of that subunit. The protein is Large ribosomal subunit protein bL20 of Thiobacillus denitrificans (strain ATCC 25259 / T1).